The following is a 178-amino-acid chain: ATP synthase subunit delta (178 aa).

It belongs to the ATPase delta chain family. In terms of assembly, F-type ATPases have 2 components, F(1) - the catalytic core - and F(0) - the membrane proton channel. F(1) has five subunits: alpha(3), beta(3), gamma(1), delta(1), epsilon(1). F(0) has three main subunits: a(1), b(2) and c(10-14). The alpha and beta chains form an alternating ring which encloses part of the gamma chain. F(1) is attached to F(0) by a central stalk formed by the gamma and epsilon chains, while a peripheral stalk is formed by the delta and b chains.

It localises to the cell inner membrane. Functionally, f(1)F(0) ATP synthase produces ATP from ADP in the presence of a proton or sodium gradient. F-type ATPases consist of two structural domains, F(1) containing the extramembraneous catalytic core and F(0) containing the membrane proton channel, linked together by a central stalk and a peripheral stalk. During catalysis, ATP synthesis in the catalytic domain of F(1) is coupled via a rotary mechanism of the central stalk subunits to proton translocation. This protein is part of the stalk that links CF(0) to CF(1). It either transmits conformational changes from CF(0) to CF(1) or is implicated in proton conduction. In Pseudomonas entomophila (strain L48), this protein is ATP synthase subunit delta.